The chain runs to 148 residues: Ubiquitin-conjugating enzyme E2 30 (148 aa).

A UBC core domain is found at 1-147; it reads MASKRINKEL…AQSWTQKYAM (147 aa). Cys85 functions as the Glycyl thioester intermediate in the catalytic mechanism.

It belongs to the ubiquitin-conjugating enzyme family. In terms of assembly, interacts with RGLG3 and RGLG4. As to expression, ubiquitously expressed at very low levels.

It catalyses the reaction S-ubiquitinyl-[E1 ubiquitin-activating enzyme]-L-cysteine + [E2 ubiquitin-conjugating enzyme]-L-cysteine = [E1 ubiquitin-activating enzyme]-L-cysteine + S-ubiquitinyl-[E2 ubiquitin-conjugating enzyme]-L-cysteine.. The protein operates within protein modification; protein ubiquitination. Accepts the ubiquitin from the E1 complex and catalyzes its covalent attachment to other proteins. This chain is Ubiquitin-conjugating enzyme E2 30 (UBC30), found in Arabidopsis thaliana (Mouse-ear cress).